Consider the following 1130-residue polypeptide: Putative protein tag-278 (1130 aa).

3 disordered regions span residues 1-92 (MSRS…DIDN), 104-129 (VARE…ELKR), and 974-1130 (NELI…AWKF). Coiled-coil stretches lie at residues 121–779 (AGRE…EEIK) and 805–1061 (EERE…ARAK). Basic and acidic residues predominate over residues 983-993 (RQTDESTSEPH). Residues 999-1011 (SITSHGVFQNFVS) show a composition bias toward polar residues. Basic and acidic residues-rich tracts occupy residues 1013–1057 (MKDK…EKSP) and 1068–1081 (RLRD…KSDN). The span at 1082–1095 (LESTPSSSSRNLLS) shows a compositional bias: low complexity. The segment covering 1116–1130 (TKKDSSSEKRPAWKF) has biased composition (basic and acidic residues).

In Caenorhabditis elegans, this protein is Putative protein tag-278 (tag-278).